We begin with the raw amino-acid sequence, 143 residues long: Fluoride-specific ion channel FluC (143 aa).

4 consecutive transmembrane segments (helical) span residues 3 to 23 (AVVW…GSGL), 41 to 61 (WGTL…LIWL), 76 to 96 (IVGL…CLVF), and 103 to 123 (LMVG…VFLG). Na(+) contacts are provided by Gly-81 and Thr-84.

It belongs to the fluoride channel Fluc/FEX (TC 1.A.43) family.

The protein localises to the cell inner membrane. It catalyses the reaction fluoride(in) = fluoride(out). Its activity is regulated as follows. Na(+) is not transported, but it plays an essential structural role and its presence is essential for fluoride channel function. Functionally, fluoride-specific ion channel. Important for reducing fluoride concentration in the cell, thus reducing its toxicity. The protein is Fluoride-specific ion channel FluC of Xylella fastidiosa (strain 9a5c).